The sequence spans 222 residues: Triosephosphate isomerase (222 aa).

Substrate is bound at residue 9–11; sequence NYK. Histidine 93 serves as the catalytic Electrophile. The Proton acceptor role is filled by glutamate 141. Substrate is bound by residues isoleucine 146, glycine 181, and 202–203; that span reads AS.

The protein belongs to the triosephosphate isomerase family. Homotetramer; dimer of dimers.

The protein localises to the cytoplasm. It carries out the reaction D-glyceraldehyde 3-phosphate = dihydroxyacetone phosphate. Its pathway is carbohydrate biosynthesis; gluconeogenesis. It participates in carbohydrate degradation; glycolysis; D-glyceraldehyde 3-phosphate from glycerone phosphate: step 1/1. Functionally, involved in the gluconeogenesis. Catalyzes stereospecifically the conversion of dihydroxyacetone phosphate (DHAP) to D-glyceraldehyde-3-phosphate (G3P). In Methanosarcina mazei (strain ATCC BAA-159 / DSM 3647 / Goe1 / Go1 / JCM 11833 / OCM 88) (Methanosarcina frisia), this protein is Triosephosphate isomerase.